A 211-amino-acid polypeptide reads, in one-letter code: PITH domain-containing protein 1 (211 aa).

Residues 20-192 enclose the PITH domain; it reads EPPEQRGLAY…EVTICNYEAS (173 aa). Tyrosine 189 is modified (phosphotyrosine).

It belongs to the PITHD1 family. Down-regulated in primary acute myeloid leukemia (AML) patients.

The protein resides in the cytoplasm. Its function is as follows. Promotes megakaryocyte differentiation by up-regulating RUNX1 expression. Regulates RUNX1 expression by activating the proximal promoter of the RUNX1 gene and by enhancing the translation activity of an internal ribosome entry site (IRES) element in the RUNX1 gene. This Homo sapiens (Human) protein is PITH domain-containing protein 1 (PITHD1).